Consider the following 452-residue polypeptide: Pup--protein ligase (452 aa).

Glu-9 provides a ligand contact to Mg(2+). Arg-53 contributes to the ATP binding site. Position 55 (Tyr-55) interacts with Mg(2+). The active-site Proton acceptor is the Asp-57. Residue Glu-63 participates in Mg(2+) binding. Residues Thr-66 and Trp-419 each contribute to the ATP site.

Belongs to the Pup ligase/Pup deamidase family. Pup-conjugating enzyme subfamily.

It carries out the reaction ATP + [prokaryotic ubiquitin-like protein]-L-glutamate + [protein]-L-lysine = ADP + phosphate + N(6)-([prokaryotic ubiquitin-like protein]-gamma-L-glutamyl)-[protein]-L-lysine.. It participates in protein degradation; proteasomal Pup-dependent pathway. Its pathway is protein modification; protein pupylation. Functionally, catalyzes the covalent attachment of the prokaryotic ubiquitin-like protein modifier Pup to the proteasomal substrate proteins, thereby targeting them for proteasomal degradation. This tagging system is termed pupylation. The ligation reaction involves the side-chain carboxylate of the C-terminal glutamate of Pup and the side-chain amino group of a substrate lysine. The sequence is that of Pup--protein ligase from Acidothermus cellulolyticus (strain ATCC 43068 / DSM 8971 / 11B).